Consider the following 417-residue polypeptide: NADH-quinone oxidoreductase subunit D (417 aa).

Belongs to the complex I 49 kDa subunit family. NDH-1 is composed of 14 different subunits. Subunits NuoB, C, D, E, F, and G constitute the peripheral sector of the complex.

The protein localises to the cell inner membrane. The enzyme catalyses a quinone + NADH + 5 H(+)(in) = a quinol + NAD(+) + 4 H(+)(out). Functionally, NDH-1 shuttles electrons from NADH, via FMN and iron-sulfur (Fe-S) centers, to quinones in the respiratory chain. The immediate electron acceptor for the enzyme in this species is believed to be ubiquinone. Couples the redox reaction to proton translocation (for every two electrons transferred, four hydrogen ions are translocated across the cytoplasmic membrane), and thus conserves the redox energy in a proton gradient. The polypeptide is NADH-quinone oxidoreductase subunit D (Hydrogenovibrio crunogenus (strain DSM 25203 / XCL-2) (Thiomicrospira crunogena)).